The chain runs to 151 residues: UPF0178 protein amb2838 (151 aa).

This sequence belongs to the UPF0178 family.

The polypeptide is UPF0178 protein amb2838 (Paramagnetospirillum magneticum (strain ATCC 700264 / AMB-1) (Magnetospirillum magneticum)).